The primary structure comprises 507 residues: Cytochrome P450 monooxygenase cloA (507 aa).

The helical transmembrane segment at 15-35 (WTWILLTTCIALISPLVLKGI) threads the bilayer. Residue N247 is glycosylated (N-linked (GlcNAc...) asparagine). Heme is bound at residue C450.

It belongs to the cytochrome P450 family. It depends on heme as a cofactor.

It is found in the membrane. Its pathway is alkaloid biosynthesis; ergot alkaloid biosynthesis. In terms of biological role, cytochrome P450 monooxygenase; part of the gene cluster that mediates the biosynthesis of fungal ergot alkaloid. DmaW catalyzes the first step of ergot alkaloid biosynthesis by condensing dimethylallyl diphosphate (DMAP) and tryptophan to form 4-dimethylallyl-L-tryptophan. The second step is catalyzed by the methyltransferase easF that methylates 4-dimethylallyl-L-tryptophan in the presence of S-adenosyl-L-methionine, resulting in the formation of 4-dimethylallyl-L-abrine. The catalase easC and the FAD-dependent oxidoreductase easE then transform 4-dimethylallyl-L-abrine to chanoclavine-I which is further oxidized by easD in the presence of NAD(+), resulting in the formation of chanoclavine-I aldehyde. Agroclavine dehydrogenase easG then mediates the conversion of chanoclavine-I aldehyde to agroclavine via a non-enzymatic adduct reaction: the substrate is an iminium intermediate that is formed spontaneously from chanoclavine-I aldehyde in the presence of glutathione. The presence of easA is not required to complete this reaction. Further conversion of agroclavine to paspalic acid is a two-step process involving oxidation of agroclavine to elymoclavine and of elymoclavine to paspalic acid, the second step being performed by the elymoclavine oxidase cloA. Paspalic acid is then further converted to D-lysergic acid. Ergopeptines are assembled from D-lysergic acid and three different amino acids by the D-lysergyl-peptide-synthetases composed each of a monomudular and a trimodular nonribosomal peptide synthetase subunit. LpsB and lpsC encode the monomodular subunits responsible for D-lysergic acid activation and incorporation into the ergopeptine backbone. LpsA1 and A2 subunits encode the trimodular nonribosomal peptide synthetase assembling the tripeptide portion of ergopeptines. LpsA1 is responsible for formation of the major ergopeptine, ergotamine, and lpsA2 for alpha-ergocryptine, the minor ergopeptine of the total alkaloid mixture elaborated by C.purpurea. D-lysergyl-tripeptides are assembled by the nonribosomal peptide synthetases and released as N-(D-lysergyl-aminoacyl)-lactams. Cyclolization of the D-lysergyl-tripeptides is performed by the Fe(2+)/2-ketoglutarate-dependent dioxygenase easH which introduces a hydroxyl group into N-(D-lysergyl-aminoacyl)-lactam at alpha-C of the aminoacyl residue followed by spontaneous condensation with the terminal lactam carbonyl group. The protein is Cytochrome P450 monooxygenase cloA of Claviceps purpurea (strain 20.1) (Ergot fungus).